Here is a 555-residue protein sequence, read N- to C-terminus: Hydroxylamine reductase (555 aa).

4 residues coordinate [4Fe-4S] cluster: Cys-5, Cys-8, Cys-17, and Cys-23. The hybrid [4Fe-2O-2S] cluster site is built by His-248, Glu-272, Cys-316, Cys-408, Cys-436, Cys-461, Glu-496, and Lys-498. Position 408 is a cysteine persulfide (Cys-408).

The protein belongs to the HCP family. Requires [4Fe-4S] cluster as cofactor. The cofactor is hybrid [4Fe-2O-2S] cluster.

The protein localises to the cytoplasm. The catalysed reaction is A + NH4(+) + H2O = hydroxylamine + AH2 + H(+). In terms of biological role, catalyzes the reduction of hydroxylamine to form NH(3) and H(2)O. The polypeptide is Hydroxylamine reductase (Natranaerobius thermophilus (strain ATCC BAA-1301 / DSM 18059 / JW/NM-WN-LF)).